Consider the following 755-residue polypeptide: Anaphase-promoting complex subunit 5 (755 aa).

Ser195 bears the Phosphoserine mark. TPR repeat units lie at residues 209–249, 250–300, 301–337, 338–378, 379–418, 419–466, 467–500, 501–540, 541–580, 581–620, 621–660, 661–696, and 697–736; these read QKQA…FNPD, FAEA…GRSL, RYAA…SNDH, VCLQ…YLAS, LGIQ…SELI, DISI…TESF, AVAL…FPPN, SQHA…ALNS, IEGV…TEMV, ISVL…QYLA, SETV…ILDK, GRAM…NLNE, and AKNY…CAML. The residue at position 232 (Thr232) is a Phosphothreonine.

It belongs to the APC5 family. As to quaternary structure, the mammalian APC/C is composed at least of 14 distinct subunits ANAPC1, ANAPC2, CDC27/APC3, ANAPC4, ANAPC5, CDC16/APC6, ANAPC7, CDC23/APC8, ANAPC10, ANAPC11, CDC26/APC12, ANAPC13, ANAPC15 and ANAPC16 that assemble into a complex of at least 19 chains with a combined molecular mass of around 1.2 MDa; APC/C interacts with FZR1 and FBXO5.

The protein localises to the nucleus. It is found in the cytoplasm. Its subcellular location is the cytoskeleton. The protein resides in the spindle. Its pathway is protein modification; protein ubiquitination. Its function is as follows. Component of the anaphase promoting complex/cyclosome (APC/C), a cell cycle-regulated E3 ubiquitin ligase that controls progression through mitosis and the G1 phase of the cell cycle. The APC/C complex acts by mediating ubiquitination and subsequent degradation of target proteins: it mainly mediates the formation of 'Lys-11'-linked polyubiquitin chains and, to a lower extent, the formation of 'Lys-48'- and 'Lys-63'-linked polyubiquitin chains. The APC/C complex catalyzes assembly of branched 'Lys-11'-/'Lys-48'-linked branched ubiquitin chains on target proteins. This Homo sapiens (Human) protein is Anaphase-promoting complex subunit 5 (ANAPC5).